We begin with the raw amino-acid sequence, 765 residues long: MKSQACLKVCLALIGLVSIVSTAYIANDVVSDYAEVKELLAAFYRKHAKKYGHDYDPAAIQAIAENMDKSVKNDKTEATVNRKLWNEVFENDIILTLPQAESLLSESNSPRSRRQAHPDPRNFWPNLTISYEFYGGEETWRQLIRSAIRHVEQNVCFKFKENGGDRDGLRYYRGNGCWSNVGRVGGRQLVSIGYGCDSLGIVSHETLHALGLWHEQSRDDRDNFISIVADKITRGTEGNFAKRTAANSDNLGQPYDLGSVMHYGAKSFAYDWSSDTIKTRDWRYQNTIGQRDGLSFKDAKMINTRYCSNVCQRSLPCLNEGYTDPNNCGRCRCPSGYGGTYCETVEYTSCGGSLTASSSYKKIESGIVQPDANCVWRIRNPGGNVEVMFDQVNFQCADPCQSYVEVKYLSQKTSTGARLCCSLPSVIRSEGDDVIIILRGTPNTAVGWRGFTLKYRAIGGTPITPATVRPTYATTTRPYWTRTASGWIHIKNPPLYKPDGQIYTSDEQSAETKYSSEELYDPSTFLSPSSSSASPALLLPSDASPQRPSAQEHDLSQLSQNALTRPTPTTTVAPDTASWSAWGEWSACSQPCGGCGTKTRVRACYGGNQVCPGSNLDRESCNAHACAKPKKGMICNGRLLLPCDLLAKLNFGSNNYLNPKLKQSGFARSSTLPLPRISQRKPVFVNELEVHPPTERFLSSSTRRVKRQTANRFCEKRFIYQCPTALLTIQMEYKPDTQGTNDAYFQQYPECCSGYTPRRGVCYKN.

Positions 1-22 (MKSQACLKVCLALIGLVSIVST) are cleaved as a signal peptide. A propeptide spanning residues 23–114 (AYIANDVVSD…SESNSPRSRR (92 aa)) is cleaved from the precursor. The 194-residue stretch at 115-308 (QAHPDPRNFW…AKMINTRYCS (194 aa)) folds into the Peptidase M12A domain. A glycan (N-linked (GlcNAc...) asparagine) is linked at Asn126. Cystine bridges form between Cys156-Cys307, Cys177-Cys196, Cys311-Cys331, Cys333-Cys342, Cys350-Cys374, and Cys400-Cys420. His204 lines the Zn(2+) pocket. Glu205 is an active-site residue. Residues His208 and His214 each contribute to the Zn(2+) site. The EGF-like domain maps to 303–343 (NTRYCSNVCQRSLPCLNEGYTDPNNCGRCRCPSGYGGTYCE). The region spanning 350-458 (CGGSLTASSS…RGFTLKYRAI (109 aa)) is the CUB domain. A disordered region spans residues 513–573 (KYSSEELYDP…TRPTPTTTVA (61 aa)). Composition is skewed to low complexity over residues 526 to 545 (LSPS…DASP) and 562 to 573 (ALTRPTPTTTVA). The region spanning 576-627 (TASWSAWGEWSACSQPCGGCGTKTRVRACYGGNQVCPGSNLDRESCNAHACA) is the TSP type-1 domain. 3 disulfides stabilise this stretch: Cys588–Cys621, Cys592–Cys626, and Cys604–Cys611.

Requires Zn(2+) as cofactor. In terms of tissue distribution, expressed in hypodermal cells. Not expressed in the seam cells in L1 to L3 larvae, but it is present in seam cells of L4 larvae. Also expressed in attachment points of the cuticle at the anterior end of larvae, in the arcade cells in the mouth, the anterior pharynx, the amphid socket cells, and in the rectal epithelial cells at the posterior end of the larvae (at protein level).

The protein localises to the secreted. Its function is as follows. Metalloprotease. Plays an essential role in molting, a process during larval stages in which a new cuticle is formed and the old cuticle is shed. Required during ecdysis, the opening of the cuticle to allow the worm to escape. This chain is Zinc metalloproteinase nas-37 (nas-37), found in Caenorhabditis elegans.